We begin with the raw amino-acid sequence, 327 residues long: Biotin synthase (327 aa).

A Radical SAM core domain is found at 42 to 268 (NKVQKASLLS…VMPASTVRLS (227 aa)). [4Fe-4S] cluster contacts are provided by cysteine 57, cysteine 61, and cysteine 64. Positions 102, 134, 194, and 266 each coordinate [2Fe-2S] cluster.

It belongs to the radical SAM superfamily. Biotin synthase family. As to quaternary structure, homodimer. Requires [4Fe-4S] cluster as cofactor. The cofactor is [2Fe-2S] cluster.

The enzyme catalyses (4R,5S)-dethiobiotin + (sulfur carrier)-SH + 2 reduced [2Fe-2S]-[ferredoxin] + 2 S-adenosyl-L-methionine = (sulfur carrier)-H + biotin + 2 5'-deoxyadenosine + 2 L-methionine + 2 oxidized [2Fe-2S]-[ferredoxin]. It participates in cofactor biosynthesis; biotin biosynthesis; biotin from 7,8-diaminononanoate: step 2/2. Its function is as follows. Catalyzes the conversion of dethiobiotin (DTB) to biotin by the insertion of a sulfur atom into dethiobiotin via a radical-based mechanism. The polypeptide is Biotin synthase (Rhizobium rhizogenes (strain K84 / ATCC BAA-868) (Agrobacterium radiobacter)).